Here is a 259-residue protein sequence, read N- to C-terminus: 3-deoxy-manno-octulosonate cytidylyltransferase (259 aa).

Belongs to the KdsB family.

The protein localises to the cytoplasm. The enzyme catalyses 3-deoxy-alpha-D-manno-oct-2-ulosonate + CTP = CMP-3-deoxy-beta-D-manno-octulosonate + diphosphate. It functions in the pathway nucleotide-sugar biosynthesis; CMP-3-deoxy-D-manno-octulosonate biosynthesis; CMP-3-deoxy-D-manno-octulosonate from 3-deoxy-D-manno-octulosonate and CTP: step 1/1. The protein operates within bacterial outer membrane biogenesis; lipopolysaccharide biosynthesis. Functionally, activates KDO (a required 8-carbon sugar) for incorporation into bacterial lipopolysaccharide in Gram-negative bacteria. The sequence is that of 3-deoxy-manno-octulosonate cytidylyltransferase from Xanthomonas euvesicatoria pv. vesicatoria (strain 85-10) (Xanthomonas campestris pv. vesicatoria).